The following is a 131-amino-acid chain: Con-Ins Q1b (131 aa).

The signal sequence occupies residues 1–24 (MTTSSYFLLVALGLLLYLCQSSFG). 4 cysteine pairs are disulfide-bonded: C29–C107, C41–C110, C53–C123, and C109–C114. Positions 59 to 92 (LQGGTDDARKKRGRASLLRKRRGFLSMLKARAKR) are cleaved as a propeptide — c peptide. At E118 the chain carries 4-carboxyglutamate; partial. S130 is subject to Serine amide.

The protein belongs to the insulin family. In terms of assembly, heterodimer of A and B chains; disulfide-linked. In terms of tissue distribution, expressed by the venom gland.

It localises to the secreted. This venom insulin facilitates prey capture by rapidly inducing hypoglycemic shock. Intraperitoneal injection of this peptide into zebrafish lowers blood glucose with the same potency than human insulin. In vivo, when applied to water, this peptide reduces overall locomotor activity of zebrafish larvae, observed as a significant decrease in the percentage of time spent swimming and movement frequency. The sequence is that of Con-Ins Q1b from Conus quercinus (Oak cone).